We begin with the raw amino-acid sequence, 266 residues long: Very-long-chain aldehyde decarbonylase GL1-11 (266 aa).

The next 4 membrane-spanning stretches (helical) occupy residues 25–45 (VVTFLLHETVFFLSGLPSLLF), 74–94 (ILYHVCVNLPVMVLSYPAFKF), 106–126 (WTVIVSQVLFYFVLEDFIFYW), and 163–183 (ILFLGFATIVGPALTGPHLFT). The Fatty acid hydroxylase domain occupies 113 to 248 (VLFYFVLEDF…FVYMDWLFGT (136 aa)).

Belongs to the sterol desaturase family. In terms of assembly, homodimer.

Its subcellular location is the endoplasmic reticulum membrane. The enzyme catalyses a long-chain fatty aldehyde + 2 NADPH + O2 + H(+) = a long-chain alkane + formate + 2 NADP(+) + H2O. Its function is as follows. Aldehyde decarbonylase involved in the conversion of aldehydes to alkanes. Core component of a very-long-chain alkane synthesis complex. This is Very-long-chain aldehyde decarbonylase GL1-11 from Oryza sativa subsp. indica (Rice).